We begin with the raw amino-acid sequence, 736 residues long: DNA topoisomerase 1 (736 aa).

The Toprim domain maps to Lys2 to Ile113. Mg(2+)-binding residues include Glu8 and Asp82. A Topo IA-type catalytic domain is found at Asp129–Ile552. Positions Ser163–Gln168 are interaction with DNA. Tyr297 acts as the O-(5'-phospho-DNA)-tyrosine intermediate in catalysis. 4 C4-type zinc fingers span residues Cys572–Cys598, Cys616–Cys642, Cys663–Cys689, and Cys702–Cys725.

The protein belongs to the type IA topoisomerase family. As to quaternary structure, monomer. Mg(2+) is required as a cofactor.

The catalysed reaction is ATP-independent breakage of single-stranded DNA, followed by passage and rejoining.. Releases the supercoiling and torsional tension of DNA, which is introduced during the DNA replication and transcription, by transiently cleaving and rejoining one strand of the DNA duplex. Introduces a single-strand break via transesterification at a target site in duplex DNA. The scissile phosphodiester is attacked by the catalytic tyrosine of the enzyme, resulting in the formation of a DNA-(5'-phosphotyrosyl)-enzyme intermediate and the expulsion of a 3'-OH DNA strand. The free DNA strand then undergoes passage around the unbroken strand, thus removing DNA supercoils. Finally, in the religation step, the DNA 3'-OH attacks the covalent intermediate to expel the active-site tyrosine and restore the DNA phosphodiester backbone. The sequence is that of DNA topoisomerase 1 from Helicobacter pylori (strain J99 / ATCC 700824) (Campylobacter pylori J99).